Consider the following 147-residue polypeptide: Cyanate hydratase (147 aa).

Residues Arg-88, Glu-91, and Ser-114 contribute to the active site.

Belongs to the cyanase family.

It carries out the reaction cyanate + hydrogencarbonate + 3 H(+) = NH4(+) + 2 CO2. Functionally, catalyzes the reaction of cyanate with bicarbonate to produce ammonia and carbon dioxide. The chain is Cyanate hydratase from Acaryochloris marina (strain MBIC 11017).